We begin with the raw amino-acid sequence, 485 residues long: MQKLKITGLSLIISGLLMAQRHAAEPVYPDQLRLFSLGQEVCGDKYRPITREEAQSVKSNIVNMMGQWQISGLANGWVIMGPVYNGEIKPGSASNTWCYPVNPVTGEIPTLSALDIPDGDEVDVQWRLVHDSANFIKPTSYLAHYLGYAWVGGNHSQYVGEDMDVTRDGDGWVIRGNNDGGCEGYRCGEKTAIKVSNFAYNLDPDSFKHGDVTQSDRQLVKTVVGWAINDSYTPQSAYDVTLRYDTATNWSKTNTYGLSEKVTTKNKFKWPLVGETELSIEIAANQSWASQNGGSTTTSLSQSVRPTVPARSKIPVKIELYKADISYPYEFKADVSYDLTLSGFLRWGGNAWYTHPDNRPNWNHTFVIGPYKDKASSIRYQWDKRYIPGEVKWWDWNWTIQQNGLSTMQNNLARVLRPVRAGITGDFSAESQFAGNIEIGAPVPLAADGKAPRALSARRGEQGLRLAIPLECRKSSPGLASATSA.

The signal sequence occupies residues 1-23 (MQKLKITGLSLIISGLLMAQRHA). Disulfide bonds link cysteine 42–cysteine 98 and cysteine 182–cysteine 187. The interval 68–84 (WQISGLANGWVIMGPVY) is interaction with host N-linked glycan. The interval 256-288 (YGLSEKVTTKNKFKWPLVGETELSIEIAANQSW) is part of the transmembrane beta-barrel after proteolytic activation of the toxin and insertion into the host membrane. The interaction with glycans from host GPI-anchor stretch occupies residues 346–355 (RWGGNAWYTH). The propeptide occupies 446–485 (AADGKAPRALSARRGEQGLRLAIPLECRKSSPGLASATSA).

This sequence belongs to the aerolysin family. Homodimer in solution; homoheptamer in the host membrane. After binding to GPI-anchored proteins in target membranes and proteolytic removal of the C-terminal propeptide, the protein assembles into a heptameric pre-pore complex. A further conformation change leads to insertion into the host membrane. Post-translationally, proteolytic cleavage and subsequent release of the propeptide trigger a major conformation change, leading to the formation of a heptameric pre-pore that then inserts into the host membrane.

It localises to the secreted. The protein resides in the host cell membrane. Its function is as follows. Secreted, cytolytic toxin that forms pores in host membranes after proteolytic removal of a C-terminal propeptide, leading to destruction of the membrane permeability barrier and cell death. The pores are formed by transmembrane beta-strands and are approximately 3 nm in diameter. This Aeromonas hydrophila protein is Aerolysin-5 (ahh5).